We begin with the raw amino-acid sequence, 110 residues long: Cytochrome subunit of sulfide dehydrogenase (110 aa).

An N-terminal signal peptide occupies residues 1-16 (MLAAAPLLLASGNGFA). Positions 41, 44, 45, and 83 each coordinate heme c.

In terms of assembly, dimer of one cytochrome and one flavoprotein. In terms of processing, binds 1 heme c group covalently per subunit.

The protein resides in the periplasm. Its function is as follows. Monoheme cytochrome that function as the electron transport subunit of sulfide dehydrogenase. This is Cytochrome subunit of sulfide dehydrogenase (fccA) from Chlorobaculum tepidum (strain ATCC 49652 / DSM 12025 / NBRC 103806 / TLS) (Chlorobium tepidum).